Reading from the N-terminus, the 792-residue chain is Endonuclease MutS2 (792 aa).

334-341 (GPNTGGKT) contacts ATP. The region spanning 717–792 (INLIGKTTDE…DAGVTIATFK (76 aa)) is the Smr domain.

Belongs to the DNA mismatch repair MutS family. MutS2 subfamily. Homodimer. Binds to stalled ribosomes, contacting rRNA.

Its function is as follows. Endonuclease that is involved in the suppression of homologous recombination and thus may have a key role in the control of bacterial genetic diversity. Functionally, acts as a ribosome collision sensor, splitting the ribosome into its 2 subunits. Detects stalled/collided 70S ribosomes which it binds and splits by an ATP-hydrolysis driven conformational change. Acts upstream of the ribosome quality control system (RQC), a ribosome-associated complex that mediates the extraction of incompletely synthesized nascent chains from stalled ribosomes and their subsequent degradation. Probably generates substrates for RQC. This is Endonuclease MutS2 from Agathobacter rectalis (strain ATCC 33656 / DSM 3377 / JCM 17463 / KCTC 5835 / VPI 0990) (Eubacterium rectale).